Consider the following 119-residue polypeptide: Achromolysin (119 aa).

This sequence belongs to the peptidase M4 family. Requires Ca(2+) as cofactor. The cofactor is Zn(2+).

It localises to the secreted. Its function is as follows. Has staphylolytic activity. This Achromobacter lyticus protein is Achromolysin.